The sequence spans 421 residues: Adenosylhomocysteinase (421 aa).

Residues D128 and E153 each coordinate substrate. NAD(+) is bound at residue T154–T156. K183 and D187 together coordinate substrate. NAD(+) is bound by residues N188, G217 to G222, E240, A296 to H298, and N343.

The protein belongs to the adenosylhomocysteinase family. NAD(+) serves as cofactor.

The protein resides in the cytoplasm. The enzyme catalyses S-adenosyl-L-homocysteine + H2O = L-homocysteine + adenosine. It functions in the pathway amino-acid biosynthesis; L-homocysteine biosynthesis; L-homocysteine from S-adenosyl-L-homocysteine: step 1/1. May play a key role in the regulation of the intracellular concentration of adenosylhomocysteine. This is Adenosylhomocysteinase from Thermococcus kodakarensis (strain ATCC BAA-918 / JCM 12380 / KOD1) (Pyrococcus kodakaraensis (strain KOD1)).